Reading from the N-terminus, the 441-residue chain is DILAAFRVTPQPGVPPEEAGXAVAAESSTGTWXTVWTDGLTSLDRYKGRCYKIEPIAGEENQYIAYVAYPLDLFEEGSVTNMFTSIVGNVFGFKALXALRLEDLRIPVAYVKTFQGPXHGIQVERDKLNKYGRPLLGCTIKPKLGLSAKNYGRAVYECLRGGLDFTKDDENVNSQPFMRWRDRFLFCAEAIYKAQAETGEIKGHYLSATAGTCEEMMKRAIFARELGVPIVMHDYLTGGFTANTSLAHYCRDNGLLLHIHRAMHAVIDRQKNHGXXFRVLXKALRMSGGDHIHSGTVVGKLEGERDITLGFVDLLRDDFIEKDRSRGIYFTQDWVSLPGVLPVASGGIHVXHMPALTEIFGDDSVLQFGGGTLGHPWGNRPGAVANRVALEACVQARNEGRDLASEGNEIIREATKWSPELAAACEVWKEIKFEFQAMDTL.

Positions 89 and 139 each coordinate substrate. K141 functions as the Proton acceptor in the catalytic mechanism. Substrate is bound at residue K143. Mg(2+)-binding residues include K167, D169, and E170. An N6-carboxylysine modification is found at K167. H260 (proton acceptor) is an active-site residue. Substrate is bound by residues R261, H293, and S345.

It belongs to the RuBisCO large chain family. Type I subfamily. As to quaternary structure, heterohexadecamer of 8 large chains and 8 small chains; disulfide-linked. The disulfide link is formed within the large subunit homodimers. Mg(2+) is required as a cofactor. Post-translationally, the disulfide bond which can form in the large chain dimeric partners within the hexadecamer appears to be associated with oxidative stress and protein turnover.

Its subcellular location is the plastid. The protein localises to the chloroplast. It carries out the reaction 2 (2R)-3-phosphoglycerate + 2 H(+) = D-ribulose 1,5-bisphosphate + CO2 + H2O. It catalyses the reaction D-ribulose 1,5-bisphosphate + O2 = 2-phosphoglycolate + (2R)-3-phosphoglycerate + 2 H(+). In terms of biological role, ruBisCO catalyzes two reactions: the carboxylation of D-ribulose 1,5-bisphosphate, the primary event in carbon dioxide fixation, as well as the oxidative fragmentation of the pentose substrate in the photorespiration process. Both reactions occur simultaneously and in competition at the same active site. The protein is Ribulose bisphosphate carboxylase large chain of Coriandrum sativum (Coriander).